Here is a 573-residue protein sequence, read N- to C-terminus: Septation ring formation regulator EzrA (573 aa).

At 1-2 the chain is on the extracellular side; that stretch reads MQ. The helical transmembrane segment at 3–21 threads the bilayer; that stretch reads VAIGIVVVAIVIYAAVKGF. At 22–573 the chain is on the cytoplasmic side; the sequence is QFYIDKQVRQ…KQADKMNDEA (552 aa). Coiled coils occupy residues 100–188, 317–364, and 416–488; these read DAQQ…LAKA, LTHA…VYQA, and ETLQ…TLKE.

It belongs to the EzrA family.

It localises to the cell membrane. Its function is as follows. Negative regulator of FtsZ ring formation; modulates the frequency and position of FtsZ ring formation. Inhibits FtsZ ring formation at polar sites. Interacts either with FtsZ or with one of its binding partners to promote depolymerization. This chain is Septation ring formation regulator EzrA, found in Lactiplantibacillus plantarum (strain ATCC BAA-793 / NCIMB 8826 / WCFS1) (Lactobacillus plantarum).